We begin with the raw amino-acid sequence, 543 residues long: Protein lin-14 (543 aa).

Disordered regions lie at residues 165–228 and 268–291; these read PNGH…SSNH and APATNGTTNGATKAAGPERKPRKP. Residues 177 to 213 show a composition bias toward polar residues; that stretch reads SMQTDEQQVKWSSPSSVDSNGQKTDSSAASAGDNQNI. Residues 268-282 are compositionally biased toward low complexity; it reads APATNGTTNGATKAA.

Cleaved by caspase ced-3 in vitro.

It localises to the nucleus. Its function is as follows. Heterochronic protein which controls the choice of stage specific cell fates. Involved in the temporal progression of vulval fate patterning, possibly by inhibiting lin-12. Acts as a transcription factor involved in the stage-specific repression of insulin/insulin-like growth factor gene ins-33. In Caenorhabditis briggsae, this protein is Protein lin-14 (lin-14).